A 459-amino-acid chain; its full sequence is ATP synthase subunit beta (459 aa).

Residue G148–T155 participates in ATP binding.

Belongs to the ATPase alpha/beta chains family. In terms of assembly, F-type ATPases have 2 components, CF(1) - the catalytic core - and CF(0) - the membrane proton channel. CF(1) has five subunits: alpha(3), beta(3), gamma(1), delta(1), epsilon(1). CF(0) has three main subunits: a(1), b(2) and c(9-12). The alpha and beta chains form an alternating ring which encloses part of the gamma chain. CF(1) is attached to CF(0) by a central stalk formed by the gamma and epsilon chains, while a peripheral stalk is formed by the delta and b chains.

The protein resides in the cell inner membrane. It carries out the reaction ATP + H2O + 4 H(+)(in) = ADP + phosphate + 5 H(+)(out). Functionally, produces ATP from ADP in the presence of a proton gradient across the membrane. The catalytic sites are hosted primarily by the beta subunits. The protein is ATP synthase subunit beta of Ruthia magnifica subsp. Calyptogena magnifica.